Consider the following 365-residue polypeptide: UDP-N-acetylglucosamine--N-acetylmuramyl-(pentapeptide) pyrophosphoryl-undecaprenol N-acetylglucosamine transferase (365 aa).

Residues 10–12 (TGG), asparagine 128, arginine 170, serine 199, isoleucine 250, and glutamine 295 each bind UDP-N-acetyl-alpha-D-glucosamine.

This sequence belongs to the glycosyltransferase 28 family. MurG subfamily.

It localises to the cell inner membrane. It catalyses the reaction di-trans,octa-cis-undecaprenyl diphospho-N-acetyl-alpha-D-muramoyl-L-alanyl-D-glutamyl-meso-2,6-diaminopimeloyl-D-alanyl-D-alanine + UDP-N-acetyl-alpha-D-glucosamine = di-trans,octa-cis-undecaprenyl diphospho-[N-acetyl-alpha-D-glucosaminyl-(1-&gt;4)]-N-acetyl-alpha-D-muramoyl-L-alanyl-D-glutamyl-meso-2,6-diaminopimeloyl-D-alanyl-D-alanine + UDP + H(+). The protein operates within cell wall biogenesis; peptidoglycan biosynthesis. Cell wall formation. Catalyzes the transfer of a GlcNAc subunit on undecaprenyl-pyrophosphoryl-MurNAc-pentapeptide (lipid intermediate I) to form undecaprenyl-pyrophosphoryl-MurNAc-(pentapeptide)GlcNAc (lipid intermediate II). The sequence is that of UDP-N-acetylglucosamine--N-acetylmuramyl-(pentapeptide) pyrophosphoryl-undecaprenol N-acetylglucosamine transferase from Pelodictyon phaeoclathratiforme (strain DSM 5477 / BU-1).